The chain runs to 167 residues: Ion-translocating oxidoreductase complex subunit B (167 aa).

The hydrophobic stretch occupies residues 1–22 (MITLIIFSFLSFLLGIILSFTA). The 60-residue stretch at 28–87 (QEDPIVAIVNELLPQSQCAQCGYSGCYPYAKAIVENSEKINKCIPGGTDLISAISSVLSI) folds into the 4Fe-4S domain. 12 residues coordinate [4Fe-4S] cluster: Cys45, Cys48, Cys53, Cys70, Cys113, Cys116, Cys119, Cys123, Cys143, Cys146, Cys149, and Cys153. 2 consecutive 4Fe-4S ferredoxin-type domains span residues 104-133 (NTVL…GAPN) and 134-163 (FIHT…IKKE).

This sequence belongs to the 4Fe4S bacterial-type ferredoxin family. RnfB subfamily. In terms of assembly, the complex is composed of six subunits: RnfA, RnfB, RnfC, RnfD, RnfE and RnfG. [4Fe-4S] cluster serves as cofactor.

Its subcellular location is the cell inner membrane. Its function is as follows. Part of a membrane-bound complex that couples electron transfer with translocation of ions across the membrane. The chain is Ion-translocating oxidoreductase complex subunit B from Buchnera aphidicola subsp. Acyrthosiphon pisum (strain 5A).